The sequence spans 237 residues: MOB kinase activator 2 (237 aa).

The disordered stretch occupies residues 1 to 21 (MDWLMGKSKAKPNGKKPAAEE). The Zn(2+) site is built by Cys78, Cys83, His157, and His162. The span at 217–229 (GGSGDGAGSGGPG) shows a compositional bias: gly residues. The disordered stretch occupies residues 217–237 (GGSGDGAGSGGPGAQNHVKER).

This sequence belongs to the MOB1/phocein family. Binds STK38 and STK38L. Post-translationally, phosphorylated.

It localises to the nucleus. It is found in the cytoplasm. Its subcellular location is the perinuclear region. In terms of biological role, stimulates the autophosphorylation and kinase activity of STK38 and STK38L. This chain is MOB kinase activator 2 (MOB2), found in Homo sapiens (Human).